Here is a 67-residue protein sequence, read N- to C-terminus: Penaeidin-4a (67 aa).

The N-terminal stretch at 1 to 19 (MRLVVCLVFLASFALVCQG) is a signal peptide. Disulfide bonds link C42–C56, C45–C63, and C57–C64. R66 is modified (arginine amide).

This sequence belongs to the penaeidin family.

It localises to the cytoplasmic granule. Its function is as follows. Antibacterial and antifungal activity. Presents chitin-binding activity. This Penaeus vannamei (Whiteleg shrimp) protein is Penaeidin-4a.